Reading from the N-terminus, the 255-residue chain is Ribosome maturation factor RimP (255 aa).

Residues 177–255 (LRRGSAPPQD…ARLKNRDTLH (79 aa)) form a disordered region. Acidic residues predominate over residues 186–202 (DGEDVDEEAGEAPEDEV). Basic and acidic residues predominate over residues 216 to 230 (PKMDKKSDKKSDKPV).

This sequence belongs to the RimP family.

It is found in the cytoplasm. Functionally, required for maturation of 30S ribosomal subunits. In Methylorubrum populi (strain ATCC BAA-705 / NCIMB 13946 / BJ001) (Methylobacterium populi), this protein is Ribosome maturation factor RimP.